A 193-amino-acid polypeptide reads, in one-letter code: Imidazoleglycerol-phosphate dehydratase (193 aa).

This sequence belongs to the imidazoleglycerol-phosphate dehydratase family.

It is found in the cytoplasm. The enzyme catalyses D-erythro-1-(imidazol-4-yl)glycerol 3-phosphate = 3-(imidazol-4-yl)-2-oxopropyl phosphate + H2O. The protein operates within amino-acid biosynthesis; L-histidine biosynthesis; L-histidine from 5-phospho-alpha-D-ribose 1-diphosphate: step 6/9. The protein is Imidazoleglycerol-phosphate dehydratase of Metallosphaera sedula (strain ATCC 51363 / DSM 5348 / JCM 9185 / NBRC 15509 / TH2).